The chain runs to 242 residues: MSMLCYTLIIAFLIGIWAAPKSEDNVPLGSPATSDLSDTSCAQTHKALKTSRNTDQRHPAPKKAEDQELGSAANIIVDPKLFQKRRFQSPRVLFSTQPPPLSRDEQSVEFLENEDALNRNIRSKRENHPVNDHGEYSVCDSVSVWVNKTTATDIKGKPVTVMVDVNLNNHVYKQYFFETKCKNPNPVPSGCRGIDSRHWNSYCTTTQSFVKALTKEGNQASWRFIRIDTACVCVISRKTGNF.

A signal peptide spans 1–18; that stretch reads MSMLCYTLIIAFLIGIWA. Residues 19–125 constitute a propeptide that is removed on maturation; it reads APKSEDNVPL…ALNRNIRSKR (107 aa). A disordered region spans residues 26 to 69; sequence VPLGSPATSDLSDTSCAQTHKALKTSRNTDQRHPAPKKAEDQEL. Residues 31-43 are compositionally biased toward polar residues; sequence PATSDLSDTSCAQ. Residues 52–66 are compositionally biased toward basic and acidic residues; sequence RNTDQRHPAPKKAED. 3 cysteine pairs are disulfide-bonded: cysteine 139–cysteine 203, cysteine 181–cysteine 231, and cysteine 191–cysteine 233. Asparagine 147 is a glycosylation site (N-linked (GlcNAc...) asparagine).

It belongs to the NGF-beta family. Homodimer; non-covalently linked. As to expression, expressed by the venom gland.

Its subcellular location is the secreted. Its function is as follows. Nerve growth factor is important for the development and maintenance of the sympathetic and sensory nervous systems. It stimulates division and differentiation of sympathetic and embryonic sensory neurons as well as basal forebrain cholinergic neurons in the brain. Its relevance in the snake venom is not clear. However, it has been shown to inhibit metalloproteinase-dependent proteolysis of platelet glycoprotein Ib alpha, suggesting a metalloproteinase inhibition to prevent metalloprotease autodigestion and/or protection against prey proteases. Binds a lipid between the two protein chains in the homodimer. The lipid-bound form promotes histamine relase from mouse mast cells, contrary to the lipid-free form. This chain is Venom nerve growth factor 1, found in Demansia vestigiata (Lesser black whip snake).